A 1407-amino-acid polypeptide reads, in one-letter code: DNA-directed RNA polymerase subunit beta' (1407 aa).

Residues Cys-70, Cys-72, Cys-85, and Cys-88 each coordinate Zn(2+). Mg(2+) is bound by residues Asp-460, Asp-462, and Asp-464. The Zn(2+) site is built by Cys-814, Cys-888, Cys-895, and Cys-898.

Belongs to the RNA polymerase beta' chain family. The RNAP catalytic core consists of 2 alpha, 1 beta, 1 beta' and 1 omega subunit. When a sigma factor is associated with the core the holoenzyme is formed, which can initiate transcription. Requires Mg(2+) as cofactor. The cofactor is Zn(2+).

It carries out the reaction RNA(n) + a ribonucleoside 5'-triphosphate = RNA(n+1) + diphosphate. Functionally, DNA-dependent RNA polymerase catalyzes the transcription of DNA into RNA using the four ribonucleoside triphosphates as substrates. This is DNA-directed RNA polymerase subunit beta' from Buchnera aphidicola subsp. Acyrthosiphon pisum (strain APS) (Acyrthosiphon pisum symbiotic bacterium).